The sequence spans 1555 residues: MPLLHRKPFVRQKPPGDLRPDEEVFYCKVTNEIFRHYDDFFERTILCNSLVWSCAVTGRPGLTYQEALESERKARQNLQSFPEPLIIPVLYLTNLTRRSRLHEICDDIFAYVKDRYFVEETVEVIRNNGTRLQCRILEVLPPLHQNGFANGHLSSADGETIVISDSDDSETQSSSFHHGKKKDAIDPLLFRYRVQPTKKEMYESAVVKATQISRRKHLFSRDKLKLFLKQHCEAQDGVIKIKASSFSAYNIAEQDFSYFFPDDPPTFIFSPANRRRGRPPKRISFGQEDSIASKQTAARYRNKAIKERDKLLKQEEMRALAFEKAKLKRERADALEARKREKEDKEKKREELKKMVEEERLKKKEEKERLKIEREKEREKLREEKRKYMEYLKQWSKPREDMECDDLKELPEPTPVKTRLPPEVFGDALMVLEFLNAFGELFDLQDEFPEGVTLAEVLEEALVGNDSEGPLCELLFFFLTAIFQAMAEEEEEVAKEQITDADTKDLTEALDEDADPTKSALSAVAALAAAWPQLHQGCSLKSLDLDSCTLSEILRLHILASGADVTSANAKYRYQKRGGFDATDDACMELRLSNPSLVKKLSSTSVYDLTPGEKMKILHALCGKLLTLVSTRDFIEDYVDVLRQAKQEFRELKAEQHRKEREATAARIRRRKEEKLKEQEQKMKEKQEKLKEDEQRNSAAVPGYGEEEREDFDTSTENKNIEQKDLDPDVVTEDEDDPGSHKRSRRGKVGQTAVKQCIKQEEMNYCIKQEPLSADAEEALRQEQQQKEKELLDKIQSAIACTNIFPLGRDRLYRRYWIFPSIPGLFIEEDYSGLTEDMLLPRPSSFHNNAQPRDPQVSIKTEESFLSESTSSLDQGPFDDSVLLPKPVHKPNRWCFYSSCAQLDQLIDALNSRGHRESALKETLLQEKSRICAQLAHFSEEKFHFSDKPQADSKPVSSRGRSSGACDISQMSAERQLELRLRDFLLDIEDRIYQGTLGAIKVTDRQVWRSALENGRYELLSEESKENGVIKTVNEDVEEMEMEQARVIVRDRLLGIKTETPSTISTSASTPQSVSNVVHYLALALFQIEQGIERRFLKAPLDGNDSGRSYKTVLDRWRESLLSSASLSQVFLHLSTLDRSVMWSKSILNARCKICRKKGDAENMVLCDGCDRGHHTYCVRPKLKAVPDGDWFCPECRPKQRSRRLSSRQRPSLESDEEMEEGMEDDDDEVDDDDEEGQSEEEEYEVEQDEEDSDDDEALSPPKRGRPQVRLPIKTKGRFGPSFPSRSQRQDPGRYPSRSQQSTPKNTAKSASKNLRKTRSAPPTETRSLRVGSRSTRHSPSALQDVFVELLSPHSKRRGRKGADHTPEHSPSFTNFRVSTSRSSRQLIPLNTAESLSLQHSESKRRGRKRQSTESSPVPLNRRSSGRQGGVHELSAFEQLVVELVRHDDSWPFLKLVSKIQVPDYYDIIKKPIALNIIREKVNKCEYKLASEFIDDIELMFSNCFEYNPRNTSEAKAGTRLQAFFHIQAQKLGLHVSPSTVDQVSTPLAAKKSRI.

A required for association with the CHRAC1/POLE3 complex region spans residues 1–128; sequence MPLLHRKPFV…EETVEVIRNN (128 aa). The required for interaction with the CHRAC1-POLE3 heterodimer. Required for interaction with the CHRAC1-POLE3 heterodimer stretch occupies residues 1 to 128; that stretch reads MPLLHRKPFV…EETVEVIRNN (128 aa). The segment at 1 to 133 is required for interaction with NCOR1; the sequence is MPLLHRKPFV…VIRNNGTRLQ (133 aa). The WAC domain maps to 22-128; the sequence is EEVFYCKVTN…EETVEVIRNN (107 aa). Phosphoserine occurs at positions 270 and 284. A DDT domain is found at 422–488; it reads PEVFGDALMV…LTAIFQAMAE (67 aa). The stretch at 635 to 701 forms a coiled coil; that stretch reads IEDYVDVLRQ…EDEQRNSAAV (67 aa). Basic and acidic residues-rich tracts occupy residues 652 to 664 and 671 to 696; these read LKAEQHRKEREAT and RKEEKLKEQEQKMKEKQEKLKEDEQR. The disordered stretch occupies residues 652–751; the sequence is LKAEQHRKER…KRSRRGKVGQ (100 aa). The tract at residues 668–935 is interaction with SMARCA5; that stretch reads IRRRKEEKLK…QEKSRICAQL (268 aa). Positions 668–935 are required for interaction with SMARCA5 and formation of the CHRAC ISWI chromatin remodeling complex; sequence IRRRKEEKLK…QEKSRICAQL (268 aa). Composition is skewed to acidic residues over residues 705–714 and 728–737; these read GEEEREDFDT and PDVVTEDEDD. At Thr732 the chain carries Phosphothreonine. Residues 773-798 adopt a coiled-coil conformation; it reads SADAEEALRQEQQQKEKELLDKIQSA. 2 disordered regions span residues 843–874 and 944–969; these read PSSFHNNAQPRDPQVSIKTEESFLSESTSSLD and HFSDKPQADSKPVSSRGRSSGACDIS. The segment covering 864 to 873 has biased composition (low complexity); that stretch reads SFLSESTSSL. Lys954 is covalently cross-linked (Glycyl lysine isopeptide (Lys-Gly) (interchain with G-Cter in SUMO2)). Residues Ser962 and Ser963 each carry the phosphoserine modification. The PHD-type zinc finger occupies 1149–1199; that stretch reads NARCKICRKKGDAENMVLCDGCDRGHHTYCVRPKLKAVPDGDWFCPECRPK. Residues 1203–1429 are disordered; that stretch reads RRLSSRQRPS…LNRRSSGRQG (227 aa). The span at 1214-1258 shows a compositional bias: acidic residues; that stretch reads ESDEEMEEGMEDDDDEVDDDDEEGQSEEEEYEVEQDEEDSDDDEA. Over residues 1263-1277 the composition is skewed to basic residues; that stretch reads KRGRPQVRLPIKTKG. The residue at position 1282 (Ser1282) is a Phosphoserine. Residues 1297-1313 are compositionally biased toward polar residues; the sequence is SRSQQSTPKNTAKSASK. Phosphoserine is present on residues Ser1320, Ser1339, Ser1352, Ser1370, Ser1401, Ser1412, and Ser1416. The span at 1369 to 1386 shows a compositional bias: polar residues; that stretch reads HSPSFTNFRVSTSRSSRQ. The Bromo domain occupies 1429–1532; sequence GGVHELSAFE…AFFHIQAQKL (104 aa). Phosphothreonine is present on Thr1546.

It belongs to the WAL family. As to quaternary structure, component of the ACF-1 ISWI chromatin remodeling complex at least composed of SMARCA1 and BAZ1A, which regulates the spacing of histone octamers on the DNA template to facilitate access to DNA. Within the ACF-1 ISWI chromatin remodeling complex interacts with SMARCA1; the interaction is direct. Component of the ACF-5 ISWI chromatin remodeling complex (also called the ACF complex) at least composed of BAZ1A and SMARCA5/SNF2H, which regulates the spacing of histone octamers on the DNA template to facilitate access to DNA. Within the ACF-5 ISWI chromatin remodeling complex interacts with SMARCA5/SNF2H; the interaction is direct. Component of the CHRAC ISWI chromatin remodeling complex at least composed of SMARCA5/SNF2H, BAZ1A/ACF1, CHRAC1 and POLE3; the complex preferentially binds DNA through the CHRAC1-POLE3 heterodimer and possesses ATP-dependent nucleosome-remodeling activity. Within the complex interacts (via N-terminus) with POLE3-CHRAC1 heterodimer; the interaction is direct and is required for the complex to preferentially bind to DNA. Within the complex interacts with SMARCA5/SNF2H; the interaction is direct and promotes the interaction with the POLE3-CHRAC1 heterodimer. Interacts with NCOR1 (via its RD1 domain); the interaction corepresses a number of NCOR1-regulated genes.

It is found in the nucleus. Its function is as follows. Regulatory subunit of the ATP-dependent ACF-1 and ACF-5 ISWI chromatin remodeling complexes, which form ordered nucleosome arrays on chromatin and slide edge- and center-positioned histone octamers away from their original location on the DNA template to facilitate access to DNA during DNA-templated processes such as DNA replication, transcription, and repair. Both complexes regulate the spacing of nucleosomes along the chromatin and have the ability to slide mononucleosomes to the center of a DNA template in an ATP-dependent manner. The ACF-1 ISWI chromatin remodeling complex has a lower ATP hydrolysis rate than the ACF-5 ISWI chromatin remodeling complex. Has a role in sensing the length of DNA which flank nucleosomes, which modulates the nucleosome spacing activity of the ACF-5 ISWI chromatin remodeling complex. Involved in DNA replication and together with SMARCA5/SNF2H is required for replication of pericentric heterochromatin in S-phase. May have a role in nuclear receptor-mediated transcription repression. This Mus musculus (Mouse) protein is Bromodomain adjacent to zinc finger domain protein 1A (Baz1a).